A 133-amino-acid polypeptide reads, in one-letter code: Large ribosomal subunit protein bL20 (133 aa).

The protein belongs to the bacterial ribosomal protein bL20 family.

Binds directly to 23S ribosomal RNA and is necessary for the in vitro assembly process of the 50S ribosomal subunit. It is not involved in the protein synthesizing functions of that subunit. The protein is Large ribosomal subunit protein bL20 of Mesorhizobium japonicum (strain LMG 29417 / CECT 9101 / MAFF 303099) (Mesorhizobium loti (strain MAFF 303099)).